The primary structure comprises 290 residues: Triplex capsid protein 1 (290 aa).

It belongs to the herpesviridae TRX1 protein family. Interacts with TRX2, MCP and capsid vertex component 2/CVC2.

It is found in the virion. The protein resides in the host nucleus. Structural component of the T=16 icosahedral capsid. The capsid is composed of pentamers and hexamers of major capsid protein/MCP, which are linked together by heterotrimers called triplexes. These triplexes are formed by a single molecule of triplex protein 1/TRX1 and two copies of triplex protein 2/TRX2. Additionally, TRX1 is required for efficient transport of TRX2 to the nucleus, which is the site of capsid assembly. This is Triplex capsid protein 1 from Human cytomegalovirus (strain AD169) (HHV-5).